The primary structure comprises 609 residues: MTIDNPSAFLKTLPTGSGVYQMQDAQGKVIYVGKARNLQKRVSSYFRRQLDSKTQAMMAQVQSIQTTITRNENEALLLEASFIKQFRPRYNVLLRDDKSYPYLYLATHQKFPRLDFYRGAKKAPGRYFGPYPNAGSVRENLALIQKLFKLRQCSESFFKNRTRPCLQYQIKRCTAPCVGYVNEQEYRRQVEDAILFFEGKNDQVIIKLTERMEVASENLVFEEAAHYRDQIRQLRRLQKQQIITGGKGNIDIIGIAESNGAIGFAILFIRSGRMIGHKPFFPNTPLGTTLQTALVEFIPQYYLSPLRNGDIPERIVTSEPLEDRLWIQRALSSGLNRKLAITDQKRAPYKQWQAMAALNAAQALSQHLAQKNTFALKLEAIQKSLALPNPIARIECFDISHTLGEATVASCVVFGEEGPIKKDYRRFNISGVTPGDDYGALRQVLTRRYVRLKEGEGILPDVLLIDGGMGQLRQAAEVLEELQVSGVILTAIAKGPGRKAGLEKLFVWGRREEIHLPADNIAFHLIQQIRDEAHRFAITAHCNRRAKRRVESTLQEIEGIGPKRRQKLLKYFGGLQELQRASIEEIARVPGVSETLAKAIYDACHQHKG.

The GIY-YIG domain occupies Thr15–Val92. One can recognise a UVR domain in the interval Asp202 to Leu237.

Belongs to the UvrC family. Interacts with UvrB in an incision complex.

The protein localises to the cytoplasm. The UvrABC repair system catalyzes the recognition and processing of DNA lesions. UvrC both incises the 5' and 3' sides of the lesion. The N-terminal half is responsible for the 3' incision and the C-terminal half is responsible for the 5' incision. In Coxiella burnetii (strain CbuK_Q154) (Coxiella burnetii (strain Q154)), this protein is UvrABC system protein C.